Consider the following 464-residue polypeptide: Chitobiosyldiphosphodolichol beta-mannosyltransferase (464 aa).

Residues 1–2 (MA) lie on the Lumenal side of the membrane. The helical transmembrane segment at 3–23 (ASCLVLLALCLLLPLLLLGGW) threads the bilayer. Topologically, residues 24–99 (KRWRRGRAAR…ELQSLAVGPR (76 aa)) are cytoplasmic. The helical intramembrane region spans 100–120 (VFQYGVKVVLQAMYLLWKLMW). The Cytoplasmic segment spans residues 121 to 464 (REPGAYIFLQ…QTVLPLVMDT (344 aa)). At serine 242 the chain carries Phosphoserine. The disordered stretch occupies residues 243–262 (PFRARSEPEDPVTERSAFTE).

The protein belongs to the glycosyltransferase group 1 family. Glycosyltransferase 33 subfamily.

It localises to the endoplasmic reticulum membrane. It catalyses the reaction an N,N'-diacetylchitobiosyl-diphospho-di-trans,poly-cis-dolichol + GDP-alpha-D-mannose = a beta-D-Man-(1-&gt;4)-beta-D-GlcNAc-(1-&gt;4)-alpha-D-GlcNAc-diphospho-di-trans,poly-cis-dolichol + GDP + H(+). It functions in the pathway protein modification; protein glycosylation. Functionally, mannosyltransferase that operates in the biosynthetic pathway of dolichol-linked oligosaccharides, the glycan precursors employed in protein asparagine (N)-glycosylation. The assembly of dolichol-linked oligosaccharides begins on the cytosolic side of the endoplasmic reticulum membrane and finishes in its lumen. The sequential addition of sugars to dolichol pyrophosphate produces dolichol-linked oligosaccharides containing fourteen sugars, including two GlcNAcs, nine mannoses and three glucoses. Once assembled, the oligosaccharide is transferred from the lipid to nascent proteins by oligosaccharyltransferases. Catalyzes, on the cytoplasmic face of the endoplasmic reticulum, the addition of the first mannose residues to the dolichol-linked oligosaccharide chain, to produce Man1GlcNAc(2)-PP-dolichol core oligosaccharide. Man1GlcNAc(2)-PP-dolichol is a substrate for ALG2, the following enzyme in the biosynthetic pathway. This chain is Chitobiosyldiphosphodolichol beta-mannosyltransferase, found in Homo sapiens (Human).